A 439-amino-acid chain; its full sequence is Diaminopimelate decarboxylase (439 aa).

At Lys66 the chain carries N6-(pyridoxal phosphate)lysine. Pyridoxal 5'-phosphate is bound by residues Gly248 and 290–293; that span reads EPGR. Substrate contacts are provided by Arg293, Arg330, and Tyr334. The active-site Proton donor is the Cys361. 2 residues coordinate substrate: Glu362 and Tyr390. Residue Tyr390 participates in pyridoxal 5'-phosphate binding.

It belongs to the Orn/Lys/Arg decarboxylase class-II family. LysA subfamily. In terms of assembly, homodimer. The cofactor is pyridoxal 5'-phosphate.

The enzyme catalyses meso-2,6-diaminopimelate + H(+) = L-lysine + CO2. It functions in the pathway amino-acid biosynthesis; L-lysine biosynthesis via DAP pathway; L-lysine from DL-2,6-diaminopimelate: step 1/1. Specifically catalyzes the decarboxylation of meso-diaminopimelate (meso-DAP) to L-lysine. This Halalkalibacterium halodurans (strain ATCC BAA-125 / DSM 18197 / FERM 7344 / JCM 9153 / C-125) (Bacillus halodurans) protein is Diaminopimelate decarboxylase.